The following is a 354-amino-acid chain: Abasic site processing protein HMCES (354 aa).

Cysteine 2 acts as the Nucleophile in catalysis. Residue cysteine 2 is modified to Thiazolidine linkage to a ring-opened DNA abasic site. Glutamate 127 is a catalytic residue. Residues lysine 148 and lysine 151 each participate in a glycyl lysine isopeptide (Lys-Gly) (interchain with G-Cter in SUMO2) cross-link. At serine 160 the chain carries Phosphoserine. A Glycyl lysine isopeptide (Lys-Gly) (interchain with G-Cter in SUMO2) cross-link involves residue lysine 276. A disordered region spans residues 292–354 (ATKSPKKEDS…EPVAKRPYSQ (63 aa)). Phosphoserine is present on serine 295. Residues 296-309 (PKKEDSKTPQKEES) show a composition bias toward basic and acidic residues. Residue lysine 306 forms a Glycyl lysine isopeptide (Lys-Gly) (interchain with G-Cter in SUMO2) linkage. Serine 322 is subject to Phosphoserine. The PIP-box motif lies at 332-338 (GLLEQWL). Residues 337–348 (WLKREKEEEPVA) show a composition bias toward basic and acidic residues. Glycyl lysine isopeptide (Lys-Gly) (interchain with G-Cter in SUMO2) cross-links involve residues lysine 339 and lysine 342.

It belongs to the SOS response-associated peptidase family. Interacts (via PIP-box motif) with PCNA. Ubiquitinated; the covalent HMCES DNA-protein cross-link is ubiquitinated, leading to its degradation by the proteasome.

The protein localises to the chromosome. Formation and reversal of DNA-protein cross-link depends on DNA context. Catalyzes formation of the thiazolidine linkage in presence of abasic sites in single-stranded DNA. Mediates the reversal of the thiazolidine cross-link in presence of double stranded DNA. In terms of biological role, sensor of abasic sites in single-stranded DNA (ssDNA) required to preserve genome integrity by promoting error-free repair of abasic sites. Acts as an enzyme that recognizes and binds abasic sites in ssDNA at replication forks and chemically modifies the lesion by forming a covalent cross-link with DNA: forms a stable thiazolidine linkage between a ring-opened abasic site and the alpha-amino and sulfhydryl substituents of its N-terminal catalytic cysteine residue. Promotes error-free repair by protecting abasic sites from translesion synthesis (TLS) polymerases and endonucleases that are error-prone and would generate mutations and double-strand breaks. The HMCES DNA-protein cross-link is then either reversed or degraded. HMCES is able to catalyze the reversal of its thiazolidine cross-link and cycle between a cross-link and a non-cross-linked state depending on DNA context: mediates self-reversal of the thiazolidine cross-link in double stranded DNA, allowing APEX1 to initiate downstream repair of abasic sites. The HMCES DNA-protein cross-link can also be degraded by the SPRTN metalloprotease following unfolding by the BRIP1/FANCJ helicase. Has preference for ssDNA, but can also accommodate double-stranded DNA with 3' or 5' overhang (dsDNA), and dsDNA-ssDNA 3' junction. Plays a protective role during somatic hypermutation of immunoglobulin genes in B-cells: acts via its ability to form covalent cross-links with abasic sites, thereby limiting the accumulation of deletions in somatic hypermutation target regions. Also involved in class switch recombination (CSR) in B-cells independently of the formation of a DNA-protein cross-link: acts by binding and protecting ssDNA overhangs to promote DNA double-strand break repair through the microhomology-mediated alternative-end-joining (Alt-EJ) pathway. Acts as a protease: mediates autocatalytic processing of its N-terminal methionine in order to expose the catalytic cysteine. This is Abasic site processing protein HMCES from Pongo abelii (Sumatran orangutan).